We begin with the raw amino-acid sequence, 3063 residues long: Collagen alpha-1(XII) chain (3063 aa).

The N-terminal stretch at 1–23 is a signal peptide; it reads MRSRLPPALAALGAALLLSSIEA. Positions 27 to 117 constitute a Fibronectin type-III 1 domain; the sequence is PPSDLNFKII…GQLTIQTGSS (91 aa). The 177-residue stretch at 140-316 folds into the VWFA 1 domain; sequence DLVFLVDGSW…DIQNEIISQV (177 aa). Ser329 carries O-linked (Xyl...) (chondroitin sulfate) serine glycosylation. Residues 336–426 form the Fibronectin type-III 2 domain; sequence PPSNLIAMEV…SIMEKTQPMK (91 aa). The 177-residue stretch at 440–616 folds into the VWFA 2 domain; the sequence is DIVFLVDGSY…RISFELTQSI (177 aa). Fibronectin type-III domains are found at residues 634–722, 725–816, 817–905, 907–998, 999–1087, and 1089–1179; these read PPKD…TEEV, APRN…VRGN, PRDL…LEER, SPQD…LSQD, SKTL…ASRF, and SPRN…TLSD. A glycan (N-linked (GlcNAc...) asparagine) is linked at Asn700. O-linked (Xyl...) (chondroitin sulfate) serine glycosylation is present at Ser798. Positions 799–830 are disordered; it reads GPGTPLTGNAATEEVRGNPRDLRVSDPTTSTM. Positions 811 to 822 are enriched in basic and acidic residues; the sequence is EEVRGNPRDLRV. Positions 862-864 match the Cell attachment site motif; sequence RGD. Residues Ser889 and Ser981 are each glycosylated (O-linked (Xyl...) (chondroitin sulfate) serine). The segment at 1077–1099 is disordered; the sequence is RQGSGTTASRFKSPRNLKTSDPT. The segment covering 1079–1099 has biased composition (polar residues); the sequence is GSGTTASRFKSPRNLKTSDPT. One can recognise a VWFA 3 domain in the interval 1199–1371; sequence DIVLLVDGSW…ESLSRIVDDL (173 aa). 10 Fibronectin type-III domains span residues 1387 to 1476, 1477 to 1567, 1568 to 1658, 1659 to 1754, 1755 to 1849, 1850 to 1935, 1936 to 2026, 2027 to 2117, 2118 to 2206, and 2207 to 2294; these read APSN…LPVP, VVSL…LPLP, RPQD…VPAP, TNLK…APKS, GPRN…TVRN, LRVY…LMRG, LARN…LPRS, GPRN…VGLL, PPQN…LYLN, and VTDL…TVKP. An N-linked (GlcNAc...) asparagine glycan is attached at Asn1763. Asn2206 carries N-linked (GlcNAc...) asparagine glycosylation. The disordered stretch occupies residues 2283 to 2312; that stretch reads GVSVKEHTTVKPTEAPTEPPTPPPPPTIPP. Over residues 2299–2311 the composition is skewed to pro residues; sequence TEPPTPPPPPTIP. Positions 2323 to 2496 constitute a VWFA 4 domain; that stretch reads DIVFLTDASW…ESFEKIEDNL (174 aa). The tract at residues 2451–2746 is nonhelical region (NC3); that stretch reads SGFSVFVVGV…NSCTCTQDSV (296 aa). Residues 2520–2712 form the Laminin G-like domain; that stretch reads GFKMLEAYNL…IQSFDIVCSP (193 aa). Residues Asn2528 and Asn2679 are each glycosylated (N-linked (GlcNAc...) asparagine). Disordered regions lie at residues 2743–2896 and 2932–3063; these read QDSV…GDRG and NDYQ…PGSG. Collagen-like domains lie at 2747–2798, 2802–2852, 2853–2898, and 2941–2990; these read GPPG…GPNG, PGEQ…AMGP, RGPP…RGDI, and PGPP…GERG. A triple-helical region (COL2) with 1 imperfection region spans residues 2747-2898; sequence GPPGPPGPAG…KGEKGDRGDI (152 aa). A Cell attachment site motif is present at residues 2779-2781; that stretch reads RGD. Over residues 2784-2794 the composition is skewed to pro residues; sequence PPGPQGPPGPQ. Over residues 2817–2826 the composition is skewed to low complexity; that stretch reads PGLPGRTGTP. Pro residues-rich tracts occupy residues 2828–2837 and 2853–2862; these read LPGPPGPMGP and RGPPGPPGSP. Over residues 2864 to 2874 the composition is skewed to low complexity; the sequence is SPGVTGPSGKP. The Cell attachment site motif lies at 2895 to 2897; sequence RGD. A nonhelical region (NC2) region spans residues 2899–2941; sequence ASQNMMRAVARQVCEQLISGQMNRFNQMLNQIPNDYQSSRNQP. Pro residues predominate over residues 2941 to 2950; it reads PGPPGPPGPP. The segment at 2942 to 3044 is triple-helical region (COL1) with 2 imperfections; that stretch reads GPPGPPGPPG…RGPPGPPGYC (103 aa). 4-hydroxyproline is present on residues Pro2944, Pro2947, Pro2950, Pro2959, Pro2965, Pro2968, Pro2971, Pro2983, Pro3000, Pro3003, Pro3014, Pro3023, Pro3026, and Pro3029. The segment covering 2957–2966 has biased composition (gly residues); it reads GEPGPGGRPG. Residues 3006-3020 show a composition bias toward low complexity; the sequence is QGESRTGPPGSTGSR. The nonhelical region (NC1) stretch occupies residues 3045–3063; the sequence is DSSQCASIPYNGQGYPGSG.

Belongs to the fibril-associated collagens with interrupted helices (FACIT) family. In terms of assembly, trimer of identical chains each containing 190 kDa of non-triple-helical sequences. Post-translationally, the triple-helical tail is stabilized by disulfide bonds at each end. In terms of processing, hydroxylation on proline residues within the sequence motif, GXPG, is most likely to be 4-hydroxy as this fits the requirement for 4-hydroxylation in vertebrates. Isoform 1 O-glycosylation; glycosaminoglycan of chondroitin-sulfate type. In terms of tissue distribution, found in collagen I-containing tissues: both isoform 1 and isoform 2 appear in amnion, chorion, skeletal muscle, small intestine, and in cell culture of dermal fibroblasts, keratinocytes and endothelial cells. Only isoform 2 is found in lung, placenta, kidney and a squamous cell carcinoma cell line. Isoform 1 is also present in the corneal epithelial Bowman's membrane (BM) and the interfibrillar matrix of the corneal stroma, but it is not detected in the limbal BM.

Its subcellular location is the secreted. It is found in the extracellular space. The protein localises to the extracellular matrix. Type XII collagen interacts with type I collagen-containing fibrils, the COL1 domain could be associated with the surface of the fibrils, and the COL2 and NC3 domains may be localized in the perifibrillar matrix. This chain is Collagen alpha-1(XII) chain (COL12A1), found in Homo sapiens (Human).